Reading from the N-terminus, the 276-residue chain is Mitochondrial outer membrane protein porin of 34 kDa (276 aa).

This sequence belongs to the eukaryotic mitochondrial porin (TC 1.B.8.1) family.

It localises to the mitochondrion outer membrane. Its function is as follows. Forms a channel through the cell membrane that allows diffusion of small hydrophilic molecules. The channel adopts an open conformation at low or zero membrane potential and a closed conformation at potentials above 30-40 mV. The open state has a weak anion selectivity whereas the closed state is cation-selective. The sequence is that of Mitochondrial outer membrane protein porin of 34 kDa from Solanum tuberosum (Potato).